Here is a 101-residue protein sequence, read N- to C-terminus: Small ribosomal subunit protein bS6 (101 aa).

Belongs to the bacterial ribosomal protein bS6 family.

Functionally, binds together with bS18 to 16S ribosomal RNA. The polypeptide is Small ribosomal subunit protein bS6 (Nitratidesulfovibrio vulgaris (strain DSM 19637 / Miyazaki F) (Desulfovibrio vulgaris)).